The primary structure comprises 288 residues: MDVTAKYELIGLMAYPIRHSLSPEMQNKALEKAGLPFTYMAFEVDNDSFPGAIEGLKALKMRGTGVSMPNKQLACEYVDELTPAAKLVGAINTIVNDDGYLRGYNTDGTGHIRAIKESGFDIKGKTMVLLGAGGASTAIGAQGAIEGLKEIKLFNRRDEFFDKALAFAQRVNENTDCVVTVTDLADQQAFAEVLASADILTNGTKVGMNPLENESLVNDISLLHPGLLVTECVYNPHMTKLLQQAQQAGCKTIDGYGMLLWQGAEQFTLWTGKDFPLEYVKQVMGFGA.

Lys-71 and Asp-107 together coordinate substrate. Residues 132-135, 155-158, Lys-205, 232-235, and Gly-255 contribute to the NAD(+) site; these read AGGA, NRRD, and CVYN.

This sequence belongs to the shikimate dehydrogenase family. Homodimer.

It carries out the reaction L-quinate + NAD(+) = 3-dehydroquinate + NADH + H(+). The catalysed reaction is L-quinate + NADP(+) = 3-dehydroquinate + NADPH + H(+). The enzyme catalyses shikimate + NADP(+) = 3-dehydroshikimate + NADPH + H(+). It catalyses the reaction shikimate + NAD(+) = 3-dehydroshikimate + NADH + H(+). Its pathway is metabolic intermediate biosynthesis; chorismate biosynthesis; chorismate from D-erythrose 4-phosphate and phosphoenolpyruvate: step 4/7. Its function is as follows. The actual biological function of YdiB remains unclear, nor is it known whether 3-dehydroshikimate or quinate represents the natural substrate. Catalyzes the reversible NAD-dependent reduction of both 3-dehydroshikimate (DHSA) and 3-dehydroquinate to yield shikimate (SA) and quinate, respectively. It can use both NAD or NADP for catalysis, however it has higher catalytic efficiency with NAD. In Shigella sonnei (strain Ss046), this protein is Quinate/shikimate dehydrogenase.